A 439-amino-acid chain; its full sequence is MKTLVWQSLSDSQQDTVLQRPAITEGANITAAVTSVINTVKQEGDAGVFALTEKFDGVKPDSIRVSNAEIEAASDRLSEEMKTALKQAYSNISKFHQAQKPQPVKVETQPGVICEQITMPINKVGLYIPGGSAPLPSTVLMLGIPAQIAGCHKVVLCSPPPIADEILYVAKLCKIDEVYNIGGAQAVAAMAYGTESVSKVDKIFGPGNAYVTEAKRQVSNDFRGAAIDMPAGPSEVLVIADESADPDFIAADLLSQAEHGPDSQVVLVTPSPIIADQVADAVERQLKELSREDIARQALGSSLLIVADSLTQCVSISNFYGPEHLIVQTKNPRELLPLLDNAGSIFLGDYSPESAGDYASGTNHVLPTYGYTRTYSSLGLADFSKRMTVQELTADGLKGLAPTVVTMAEAEGLDAHKRAVTIRIEKLAQLDVNKQEVNQ.

NAD(+) is bound by residues Y127, Q185, and N208. S234, Q256, and H259 together coordinate substrate. The Zn(2+) site is built by Q256 and H259. Residues E323 and H324 each act as proton acceptor in the active site. H324, D357, E411, and H416 together coordinate substrate. D357 is a binding site for Zn(2+). H416 is a Zn(2+) binding site.

This sequence belongs to the histidinol dehydrogenase family. It depends on Zn(2+) as a cofactor.

It carries out the reaction L-histidinol + 2 NAD(+) + H2O = L-histidine + 2 NADH + 3 H(+). It functions in the pathway amino-acid biosynthesis; L-histidine biosynthesis; L-histidine from 5-phospho-alpha-D-ribose 1-diphosphate: step 9/9. Functionally, catalyzes the sequential NAD-dependent oxidations of L-histidinol to L-histidinaldehyde and then to L-histidine. The chain is Histidinol dehydrogenase from Aliivibrio fischeri (strain ATCC 700601 / ES114) (Vibrio fischeri).